Consider the following 148-residue polypeptide: Cytochrome c-type biogenesis protein CcmE (148 aa).

At 1–7 (MKPRHKK) the chain is on the cytoplasmic side. A helical; Signal-anchor for type II membrane protein transmembrane segment spans residues 8–28 (LAIIASSVTALGVASVLVLNA). The Periplasmic portion of the chain corresponds to 29 to 148 (FQSNLVFFFS…ADKARKTVMQ (120 aa)). The heme site is built by histidine 123 and tyrosine 127.

This sequence belongs to the CcmE/CycJ family.

The protein localises to the cell inner membrane. Functionally, heme chaperone required for the biogenesis of c-type cytochromes. Transiently binds heme delivered by CcmC and transfers the heme to apo-cytochromes in a process facilitated by CcmF and CcmH. This is Cytochrome c-type biogenesis protein CcmE from Nitrosospira multiformis (strain ATCC 25196 / NCIMB 11849 / C 71).